Consider the following 172-residue polypeptide: Interferon tau-3 (172 aa).

Intrachain disulfides connect cysteine 1–cysteine 99 and cysteine 29–cysteine 139. An N-linked (GlcNAc...) asparagine glycan is attached at asparagine 78.

Belongs to the alpha/beta interferon family. IFN-alphaII subfamily. Constitutively and exclusively expressed in the mononuclear cells of the extraembryonic trophectoderm.

It localises to the secreted. In terms of biological role, paracrine hormone primarily responsible for maternal recognition of pregnancy. Interacts with endometrial receptors, probably type I interferon receptors, and blocks estrogen receptor expression, preventing the estrogen-induced increase in oxytocin receptor expression in the endometrium. This results in the suppression of the pulsatile endometrial release of the luteolytic hormone prostaglandin F2-alpha, hindering the regression of the corpus luteum (luteolysis) and therefore a return to ovarian cyclicity. This, and a possible direct effect of IFN-tau on prostaglandin synthesis, leads in turn to continued ovarian progesterone secretion, which stimulates the secretion by the endometrium of the nutrients required for the growth of the conceptus. In summary, displays particularly high antiviral and antiproliferative potency concurrently with particular weak cytotoxicity, high antiluteolytic activity and immunomodulatory properties. In contrast with other IFNs, IFN-tau is not virally inducible. The chain is Interferon tau-3 (IFNT3) from Bos taurus (Bovine).